Consider the following 470-residue polypeptide: ATP synthase subunit beta (470 aa).

158-165 (GGAGVGKT) is a binding site for ATP.

The protein belongs to the ATPase alpha/beta chains family. In terms of assembly, F-type ATPases have 2 components, CF(1) - the catalytic core - and CF(0) - the membrane proton channel. CF(1) has five subunits: alpha(3), beta(3), gamma(1), delta(1), epsilon(1). CF(0) has three main subunits: a(1), b(2) and c(9-12). The alpha and beta chains form an alternating ring which encloses part of the gamma chain. CF(1) is attached to CF(0) by a central stalk formed by the gamma and epsilon chains, while a peripheral stalk is formed by the delta and b chains.

It is found in the cell membrane. The catalysed reaction is ATP + H2O + 4 H(+)(in) = ADP + phosphate + 5 H(+)(out). Functionally, produces ATP from ADP in the presence of a proton gradient across the membrane. The catalytic sites are hosted primarily by the beta subunits. The sequence is that of ATP synthase subunit beta from Shouchella clausii (strain KSM-K16) (Alkalihalobacillus clausii).